A 103-amino-acid polypeptide reads, in one-letter code: Pyrimidine/purine nucleoside phosphorylase (103 aa).

The protein belongs to the nucleoside phosphorylase PpnP family.

It carries out the reaction a purine D-ribonucleoside + phosphate = a purine nucleobase + alpha-D-ribose 1-phosphate. The catalysed reaction is adenosine + phosphate = alpha-D-ribose 1-phosphate + adenine. It catalyses the reaction cytidine + phosphate = cytosine + alpha-D-ribose 1-phosphate. The enzyme catalyses guanosine + phosphate = alpha-D-ribose 1-phosphate + guanine. It carries out the reaction inosine + phosphate = alpha-D-ribose 1-phosphate + hypoxanthine. The catalysed reaction is thymidine + phosphate = 2-deoxy-alpha-D-ribose 1-phosphate + thymine. It catalyses the reaction uridine + phosphate = alpha-D-ribose 1-phosphate + uracil. The enzyme catalyses xanthosine + phosphate = alpha-D-ribose 1-phosphate + xanthine. Catalyzes the phosphorolysis of diverse nucleosides, yielding D-ribose 1-phosphate and the respective free bases. Can use uridine, adenosine, guanosine, cytidine, thymidine, inosine and xanthosine as substrates. Also catalyzes the reverse reactions. This chain is Pyrimidine/purine nucleoside phosphorylase, found in Shewanella putrefaciens (strain CN-32 / ATCC BAA-453).